Consider the following 749-residue polypeptide: Transcription factor RFX3 (749 aa).

Residues 183 to 258 (HLQWLLDNYE…YHYYGIRVKP (76 aa)) constitute a DNA-binding region (RFX-type winged-helix).

The protein belongs to the RFX family.

Its subcellular location is the nucleus. Functionally, transcription factor required for ciliogenesis and islet cell differentiation during endocrine pancreas development. The polypeptide is Transcription factor RFX3 (rfx3) (Xenopus tropicalis (Western clawed frog)).